Consider the following 175-residue polypeptide: MIPAYLSNPFAAVFGGGKPIDGGRTYKDGRRILGDGKTYRGLFSGIFCGFLAGCVEVWLSFRGFEILGIEMPGFGPDYTSSLIVVLALASGALFGDMFKSFFKRRMGLKRGASLPLVDQLDFVVGAWVFTYLAAPEWFVSNFTPGIMLTVIIITPLLHLTTNIIGYFIGVKKEPW.

4 helical membrane-spanning segments follow: residues 41-61 (GLFS…WLSF), 82-102 (LIVV…KSFF), 122-142 (FVVG…VSNF), and 150-170 (VIII…FIGV).

It belongs to the CDP-archaeol synthase family. Mg(2+) is required as a cofactor.

The protein resides in the cell membrane. The catalysed reaction is 2,3-bis-O-(geranylgeranyl)-sn-glycerol 1-phosphate + CTP + H(+) = CDP-2,3-bis-O-(geranylgeranyl)-sn-glycerol + diphosphate. It participates in membrane lipid metabolism; glycerophospholipid metabolism. Functionally, catalyzes the formation of CDP-2,3-bis-(O-geranylgeranyl)-sn-glycerol (CDP-archaeol) from 2,3-bis-(O-geranylgeranyl)-sn-glycerol 1-phosphate (DGGGP) and CTP. This reaction is the third ether-bond-formation step in the biosynthesis of archaeal membrane lipids. This is CDP-archaeol synthase from Methanosarcina mazei (strain ATCC BAA-159 / DSM 3647 / Goe1 / Go1 / JCM 11833 / OCM 88) (Methanosarcina frisia).